The primary structure comprises 870 residues: DNA mismatch repair protein MutS (870 aa).

ATP is bound at residue 620–627 (GPNMAGKS).

Belongs to the DNA mismatch repair MutS family.

In terms of biological role, this protein is involved in the repair of mismatches in DNA. It is possible that it carries out the mismatch recognition step. This protein has a weak ATPase activity. The chain is DNA mismatch repair protein MutS from Syntrophotalea carbinolica (strain DSM 2380 / NBRC 103641 / GraBd1) (Pelobacter carbinolicus).